The following is a 461-amino-acid chain: Pup--protein ligase (461 aa).

Mg(2+) is bound at residue E9. R53 provides a ligand contact to ATP. Y55 provides a ligand contact to Mg(2+). The active-site Proton acceptor is the D57. E63 is a binding site for Mg(2+). 2 residues coordinate ATP: T66 and W420.

The protein belongs to the Pup ligase/Pup deamidase family. Pup-conjugating enzyme subfamily.

It catalyses the reaction ATP + [prokaryotic ubiquitin-like protein]-L-glutamate + [protein]-L-lysine = ADP + phosphate + N(6)-([prokaryotic ubiquitin-like protein]-gamma-L-glutamyl)-[protein]-L-lysine.. It functions in the pathway protein degradation; proteasomal Pup-dependent pathway. Its pathway is protein modification; protein pupylation. Its function is as follows. Catalyzes the covalent attachment of the prokaryotic ubiquitin-like protein modifier Pup to the proteasomal substrate proteins, thereby targeting them for proteasomal degradation. This tagging system is termed pupylation. The ligation reaction involves the side-chain carboxylate of the C-terminal glutamate of Pup and the side-chain amino group of a substrate lysine. The protein is Pup--protein ligase of Renibacterium salmoninarum (strain ATCC 33209 / DSM 20767 / JCM 11484 / NBRC 15589 / NCIMB 2235).